A 75-amino-acid chain; its full sequence is Defensin-like protein (75 aa).

The first 24 residues, 1–24, serve as a signal peptide directing secretion; that stretch reads MEKKSIAGLCFLFLVLFVAQEVVV. Cystine bridges form between cysteine 31-cysteine 75, cysteine 42-cysteine 63, cysteine 48-cysteine 69, and cysteine 52-cysteine 71.

The protein belongs to the DEFL family.

The protein localises to the secreted. This protein is required for germination. This chain is Defensin-like protein, found in Vigna unguiculata (Cowpea).